Here is a 428-residue protein sequence, read N- to C-terminus: MSKTLIRGAKVLGGEPQDVLIDGTVVEAVGTNLSAEGAEVVEADGKVLLPGLVDLHTHLREPGREDSETVLTGTRAAASGGYTNVFAMANTFPVADTAGVVEQVWRLGQESGYCDVQPIGAVTVGLEGAKLAELGAMHESAAGVTVFSDDGKCVHDAVIMRRALEYVKAFNGVVAQHAQEPRLTEGAQMNEGVVSAELGLGGWPAVAEESVIARDVLLAEHVGSRVHICHLSTAGSVEIVRWAKSRGIDVTAEVTPHHLLLTDELVRSYNPVYKVNPPLRTERDVMALREALADGTIDIVATDHAPHPHEDKDCEWAAAAMGMVGLETALSVVQETMVDTGLLDWAGVADRMSFKPAKIGQATGHGRPVSAGEPANLTLVDAAYRGQVDPAGFASRSRNTPYEGRELPGRVTHTWLRGKATLVDGKLT.

Zn(2+)-binding residues include H56 and H58. Substrate-binding positions include 58 to 60 and N90; that span reads HLR. D150, H177, and H230 together coordinate Zn(2+). Substrate is bound at residue N276. D303 is a binding site for Zn(2+). The active site involves D303. Substrate is bound at residue H307.

It belongs to the metallo-dependent hydrolases superfamily. DHOase family. Class I DHOase subfamily. Zn(2+) serves as cofactor.

It carries out the reaction (S)-dihydroorotate + H2O = N-carbamoyl-L-aspartate + H(+). Its pathway is pyrimidine metabolism; UMP biosynthesis via de novo pathway; (S)-dihydroorotate from bicarbonate: step 3/3. In terms of biological role, catalyzes the reversible cyclization of carbamoyl aspartate to dihydroorotate. The sequence is that of Dihydroorotase from Streptomyces coelicolor (strain ATCC BAA-471 / A3(2) / M145).